The chain runs to 151 residues: Large ribosomal subunit protein bL9 (151 aa).

This sequence belongs to the bacterial ribosomal protein bL9 family.

In terms of biological role, binds to the 23S rRNA. The chain is Large ribosomal subunit protein bL9 from Prochlorococcus marinus (strain MIT 9301).